The primary structure comprises 279 residues: Acyl-coenzyme A thioesterase MBLAC2 (279 aa).

S2 carries the post-translational modification N-acetylserine. Zn(2+) contacts are provided by H83, H85, D87, H88, H170, D189, and H231. Residue C254 is the site of S-palmitoyl cysteine attachment.

This sequence belongs to the metallo-beta-lactamase superfamily. Glyoxalase II family. Zn(2+) is required as a cofactor. In terms of processing, palmitoylated on Cys-254 by ZDHHC20.

The protein localises to the endoplasmic reticulum membrane. It localises to the cell membrane. It catalyses the reaction hexadecanoyl-CoA + H2O = hexadecanoate + CoA + H(+). It carries out the reaction dodecanoyl-CoA + H2O = dodecanoate + CoA + H(+). The catalysed reaction is tetradecanoyl-CoA + H2O = tetradecanoate + CoA + H(+). The enzyme catalyses octadecanoyl-CoA + H2O = octadecanoate + CoA + H(+). It catalyses the reaction a beta-lactam + H2O = a substituted beta-amino acid. Acyl-CoA thioesterases are a group of enzymes that catalyze the hydrolysis of acyl-CoAs to the free fatty acid and coenzyme A (CoASH), providing the potential to regulate intracellular levels of acyl-CoAs, free fatty acids and CoASH. Has an acyl-CoA thioesterase activity towards the long chain fatty acyl-CoA thioester palmitoyl-CoA (hexadecanoyl-CoA; C16:0-CoA). Displays a substrate preference for fatty acyl-CoAs with chain-lengths C12-C18. The chain is Acyl-coenzyme A thioesterase MBLAC2 (MBLAC2) from Bos taurus (Bovine).